The primary structure comprises 402 residues: uncharacterized protein (402 aa).

9 helical membrane-spanning segments follow: residues 13–33 (IGVLDVLRGMAIFGILFVNLA), 68–88 (FFIQTKCILLFSFLFGFGMVV), 108–128 (LMALLLFGTIHAFLIWDGDIL), 149–169 (LLIWAVSLYLLFSIPFMLTSF), 223–243 (LNYFFASIPYFSMFLLGAAAA), 261–281 (LWMAGLVIGIGAQVLYSVTDK), 283–303 (ICLLIGAPFLMFFYVTTVVYL), 327–347 (YLMQSIVCTWIFYHYGLGLYG), and 353–373 (AGVLITIAVCAVQMVFSHLWL).

It is found in the cell membrane. In terms of biological role, involved in transport. This is an uncharacterized protein from Bacillus subtilis (strain 168).